Consider the following 449-residue polypeptide: MMWKALLIAVLAIAHCQAVLETDANTLVLLDNLAIRETHSIFFKSLQDRGFKLTYKLADDSSLLLSKYGEYLYKNVIIFAPSVEEFGGDVSVERLAQFVDDGGNVLVAGSEKSGDALREFASECGFELDEENAAVIDHLHYDVSDAGEHTTILTSAKNLIQADTIVGKANRQADAAPLLYRGTGLIADKENPLVLKLLTAESTAYSYNPEASVSDYPHAVGRGTLLIAALQARNNARVVFSGSLLFFSDESFTTAVQYAQSGVFHKLAGNRDVAESISKWVFGETGRLRVASVQHHKEGELLPPDQAYTITDPVVYTIGIEELVQGEWRAFKASDIQLEFVRIDPFVRTYLKQTNTGAYQAKFKIPDVYGVYQFKVDYNRVGYTHLYSTTQVSVRPLEHTQYERFIPSAFPYYTSAFSMMIGVFVFSFVFLHFKDEPVGRAAKEDKKSQ.

Residues 1–18 (MMWKALLIAVLAIAHCQA) form the signal peptide. Over 19–412 (VLETDANTLV…ERFIPSAFPY (394 aa)) the chain is Lumenal. Residues 413–433 (YTSAFSMMIGVFVFSFVFLHF) form a helical membrane-spanning segment. The Cytoplasmic segment spans residues 434 to 449 (KDEPVGRAAKEDKKSQ).

The protein belongs to the DDOST 48 kDa subunit family. As to quaternary structure, component of the oligosaccharyltransferase (OST) complex.

The protein resides in the endoplasmic reticulum membrane. Its pathway is protein modification; protein glycosylation. In terms of biological role, subunit of the oligosaccharyl transferase (OST) complex that catalyzes the initial transfer of a defined glycan (Glc(3)Man(9)GlcNAc(2) in eukaryotes) from the lipid carrier dolichol-pyrophosphate to an asparagine residue within an Asn-X-Ser/Thr consensus motif in nascent polypeptide chains, the first step in protein N-glycosylation. N-glycosylation occurs cotranslationally and the complex associates with the Sec61 complex at the channel-forming translocon complex that mediates protein translocation across the endoplasmic reticulum (ER). All subunits are required for a maximal enzyme activity. Required for the assembly of both SST3A- and SS3B-containing OST complexes. The polypeptide is Dolichyl-diphosphooligosaccharide--protein glycosyltransferase 48 kDa subunit (Ost48) (Drosophila melanogaster (Fruit fly)).